A 304-amino-acid chain; its full sequence is Small ribosomal subunit protein uS3 (304 aa).

The 70-residue stretch at 17 to 86 (IDEFFAEELG…DPQVDVQEVD (70 aa)) folds into the KH type-2 domain. Residues 216-304 (LLEGEPEDSE…DEMDEEGDDE (89 aa)) are disordered.

The protein belongs to the universal ribosomal protein uS3 family. Part of the 30S ribosomal subunit.

In terms of biological role, binds the lower part of the 30S subunit head. The protein is Small ribosomal subunit protein uS3 of Haloarcula marismortui (strain ATCC 43049 / DSM 3752 / JCM 8966 / VKM B-1809) (Halobacterium marismortui).